A 67-amino-acid polypeptide reads, in one-letter code: Large ribosomal subunit protein bL35 (67 aa).

The protein belongs to the bacterial ribosomal protein bL35 family.

The chain is Large ribosomal subunit protein bL35 from Methylorubrum populi (strain ATCC BAA-705 / NCIMB 13946 / BJ001) (Methylobacterium populi).